The following is an 822-amino-acid chain: ATP-dependent zinc metalloprotease FTSH 8, mitochondrial (822 aa).

Low complexity predominate over residues 1-25; that stretch reads MSLASLARALSRRSAPSSSRARQGF. Disordered regions lie at residues 1–50, 103–131, and 202–221; these read MSLA…LHGG, NYYP…STDD, and SSPQ…TTND. The transit peptide at 1–93 directs the protein to the mitochondrion; the sequence is MSLASLARAL…LANPQFRRLF (93 aa). Positions 108–127 are enriched in basic and acidic residues; that stretch reads GKKEAPKGDGSNKSDSKQDS. Position 375-382 (375-382) interacts with ATP; it reads GPPGTGKT. His600 contributes to the Zn(2+) binding site. Residue Glu601 is part of the active site. 2 residues coordinate Zn(2+): His604 and Asp676. Residues 781–822 form a disordered region; that stretch reads PTNYDLFKQGFQDEEDSKNQEAAKTPQPDDDGTPSLGEVVPT.

In the N-terminal section; belongs to the AAA ATPase family. The protein in the C-terminal section; belongs to the peptidase M41 family. The cofactor is Zn(2+).

Its subcellular location is the mitochondrion. Its function is as follows. Probable ATP-dependent zinc metallopeptidase. The polypeptide is ATP-dependent zinc metalloprotease FTSH 8, mitochondrial (FTSH8) (Oryza sativa subsp. japonica (Rice)).